The following is a 253-amino-acid chain: Blue-light photoreceptor (253 aa).

One can recognise a PAS domain in the interval 6–79 (KFDVILKALN…AKIRHAINEK (74 aa)). The residue at position 56 (C56) is an S-4a-FMN cysteine. A PAC domain is found at 80–133 (STANVLLKNYRKNGTSFMNELTIEPIYDDNDHLYFVGIQKDVTTEHNYQLELEK). In terms of domain architecture, STAS spans 142–253 (STPIVPIKEN…STIKEALQFY (112 aa)).

In terms of processing, FMN binds covalently to cysteine after exposure to blue light and this bond is spontaneously broken in the dark.

Exhibits the same spectroscopical features and blue-light induced photochemistry as plants phototropins, with the reversible formation of a blue-shifted photoproduct, assigned to an FMN-cysteine thiol adduct. Positive regulator in the activation of the general stress transcription factor sigma-B. The chain is Blue-light photoreceptor from Listeria innocua serovar 6a (strain ATCC BAA-680 / CLIP 11262).